Consider the following 316-residue polypeptide: Probable cell division protein WhiA (316 aa).

The H-T-H motif DNA-binding region spans 275–309; sequence TLKELGEMVSGGKISKSGINHRLRKIDDIAEKLRA.

Belongs to the WhiA family.

Involved in cell division and chromosome segregation. The protein is Probable cell division protein WhiA of Bacillus anthracis (strain CDC 684 / NRRL 3495).